Here is a 352-residue protein sequence, read N- to C-terminus: Chorismate synthase (352 aa).

Arginine 48 contacts NADP(+). Residues 125-127 (RSS), 237-238 (NA), glycine 278, 293-297 (KPTSS), and arginine 319 each bind FMN.

It belongs to the chorismate synthase family. Homotetramer. The cofactor is FMNH2.

The enzyme catalyses 5-O-(1-carboxyvinyl)-3-phosphoshikimate = chorismate + phosphate. It functions in the pathway metabolic intermediate biosynthesis; chorismate biosynthesis; chorismate from D-erythrose 4-phosphate and phosphoenolpyruvate: step 7/7. Its function is as follows. Catalyzes the anti-1,4-elimination of the C-3 phosphate and the C-6 proR hydrogen from 5-enolpyruvylshikimate-3-phosphate (EPSP) to yield chorismate, which is the branch point compound that serves as the starting substrate for the three terminal pathways of aromatic amino acid biosynthesis. This reaction introduces a second double bond into the aromatic ring system. This is Chorismate synthase from Francisella tularensis subsp. holarctica (strain FTNF002-00 / FTA).